Reading from the N-terminus, the 508-residue chain is Glycerol kinase (508 aa).

Position 14 (Thr-14) interacts with ADP. Residues Thr-14, Thr-15, and Ser-16 each contribute to the ATP site. Thr-14 contacts sn-glycerol 3-phosphate. Arg-18 serves as a coordination point for ADP. Sn-glycerol 3-phosphate contacts are provided by Arg-84, Glu-85, and Tyr-136. Arg-84, Glu-85, and Tyr-136 together coordinate glycerol. The residue at position 232 (His-232) is a Phosphohistidine; by HPr. Residue Asp-246 participates in sn-glycerol 3-phosphate binding. Positions 246 and 247 each coordinate glycerol. Positions 268 and 311 each coordinate ADP. Residues Thr-268, Gly-311, Gln-315, and Gly-412 each coordinate ATP. Residues Gly-412 and Asn-416 each contribute to the ADP site.

It belongs to the FGGY kinase family. Homotetramer and homodimer (in equilibrium). The phosphoenolpyruvate-dependent sugar phosphotransferase system (PTS), including enzyme I, and histidine-containing protein (HPr) are required for the phosphorylation, which leads to the activation of the enzyme.

It carries out the reaction glycerol + ATP = sn-glycerol 3-phosphate + ADP + H(+). Its pathway is polyol metabolism; glycerol degradation via glycerol kinase pathway; sn-glycerol 3-phosphate from glycerol: step 1/1. Activated by phosphorylation and inhibited by fructose 1,6-bisphosphate (FBP). In terms of biological role, key enzyme in the regulation of glycerol uptake and metabolism. Catalyzes the phosphorylation of glycerol to yield sn-glycerol 3-phosphate. This Streptococcus pyogenes serotype M12 (strain MGAS2096) protein is Glycerol kinase.